We begin with the raw amino-acid sequence, 492 residues long: Prostaglandin E2 receptor EP4 subtype (492 aa).

The Extracellular portion of the chain corresponds to 1–19; the sequence is MSIPGTNASSSQASNPLNS. N7 carries an N-linked (GlcNAc...) asparagine glycan. A helical transmembrane segment spans residues 20 to 43; the sequence is PVTIPAVMFIFGVVGNLVAIVVLC. The Cytoplasmic segment spans residues 44 to 55; the sequence is KSRKEQKETTFY. A helical membrane pass occupies residues 56-79; sequence TLVCGLAVTDLLGTLLVSPVTIAT. Topologically, residues 80 to 96 are extracellular; that stretch reads YLKGQWPGGHALCEYST. C92 and C170 are oxidised to a cystine. A helical membrane pass occupies residues 97–115; the sequence is FILLFFGLSGLSIICAMSI. The Cytoplasmic segment spans residues 116 to 135; the sequence is ERYLAINHAYFYSHYVDKRL. The helical transmembrane segment at 136–160 threads the bilayer; sequence AGLTLFAVYASNVLFCALPSMGLGS. Topologically, residues 161-184 are extracellular; the sequence is SRLQYPATWCFIDWTTNVTAHAAF. Residues 185-211 form a helical membrane-spanning segment; the sequence is SYMYAGFSSFLILATVLCNVLVCGALL. Over 212–273 the chain is Cytoplasmic; that stretch reads RMHRQFMRRT…RSFRRIAGAE (62 aa). The helical transmembrane segment at 274-301 threads the bilayer; it reads IQMVILLIATSLVVLICSIPLVVRVFVN. Topologically, residues 302–318 are extracellular; sequence QLYRPQLEPVIGKNPDL. A helical membrane pass occupies residues 319 to 338; the sequence is QAIRIASVSPILDPWIYILL. Topologically, residues 339 to 492 are cytoplasmic; it reads RKTVLSKAIE…ETLNLSEKCI (154 aa). Residues 361-374 show a composition bias toward basic and acidic residues; the sequence is RRERSGPHCSDSRR. A disordered region spans residues 361–383; sequence RRERSGPHCSDSRRTSSAVSGHS. 4 positions are modified to phosphoserine: S380, S383, S385, and S388.

It belongs to the G-protein coupled receptor 1 family. As to quaternary structure, interacts with FEM1A. Post-translationally, phosphorylation mediates agonist-mediated desensitization by promoting cytoplasmic retention.

The protein resides in the cell membrane. Functionally, receptor for prostaglandin E2 (PGE2). The activity of this receptor is mediated by G(s) proteins that stimulate adenylate cyclase. Has a relaxing effect on smooth muscle. May play an important role in regulating renal hemodynamics, intestinal epithelial transport, adrenal aldosterone secretion, and uterine function. In Bos taurus (Bovine), this protein is Prostaglandin E2 receptor EP4 subtype (PTGER4).